A 248-amino-acid polypeptide reads, in one-letter code: MVAPRISPKIVLVGFALFAIISASLAFPSGLNCPDPKPYPKFFLDSLWSGPSGYLGTTLIQGYVMIDTTGEFDFAKVASINGTFLQYYSKVLGTYVSEMYINLFGQQVKVMEAPFTLLERNPFNRFGEYCMVSNPRSVMPGYVEGLPITNKFFYNTYYNDTHGKSFGNVEQSEYFFFDETRNNSINCLTEFNPDATIKTFTCYKFQKVSNNVIPPTSKRSIEDMDSLRIGGLDLPEELVAPKYRHYFK.

The first 26 residues, 1–26, serve as a signal peptide directing secretion; sequence MVAPRISPKIVLVGFALFAIISASLA.

This is an uncharacterized protein from Acanthamoeba polyphaga mimivirus (APMV).